The chain runs to 242 residues: Transcriptional regulatory protein GltR (242 aa).

In terms of domain architecture, Response regulatory spans 7–123 (SILLVDDDQE…ELLARIKALL (117 aa)). Asp56 is modified (4-aspartylphosphate). Residues 134–234 (GDVLAFEDWR…VRGSGYLLAA (101 aa)) constitute a DNA-binding region (ompR/PhoB-type).

Phosphorylated by GtrS.

The protein resides in the cytoplasm. With respect to regulation, phosphorylation of GltR induces its dissociation from DNA leading to transcriptional activation. Member of the two-component regulatory system GtrS/GltR involved in the regulation of glucose metabolism and transport, as well as regulation of the exotoxin A gene expression. GltR controls the transcription of genes involved in glucose metabolism (glk and edd/gap-1) and transport (oprB) as well as the expression of toxA that encodes exotoxin A, the primary virulence factor. Acts as a repressor that is released from its target operators upon phosphorylation. Functionally, contributes to modulation of the type III secretion system (T3SS) in response to host cells via the regulation of the OprB transport system. The chain is Transcriptional regulatory protein GltR from Pseudomonas aeruginosa (strain ATCC 15692 / DSM 22644 / CIP 104116 / JCM 14847 / LMG 12228 / 1C / PRS 101 / PAO1).